The primary structure comprises 604 residues: Elongation factor 4 (604 aa).

In terms of domain architecture, tr-type G spans 10–191; the sequence is KNIRNFSIIA…KIITTIPAPS (182 aa). GTP is bound by residues 22–27 and 138–141; these read DHGKST and NKID.

The protein belongs to the TRAFAC class translation factor GTPase superfamily. Classic translation factor GTPase family. LepA subfamily.

The protein resides in the cell inner membrane. It carries out the reaction GTP + H2O = GDP + phosphate + H(+). Functionally, required for accurate and efficient protein synthesis under certain stress conditions. May act as a fidelity factor of the translation reaction, by catalyzing a one-codon backward translocation of tRNAs on improperly translocated ribosomes. Back-translocation proceeds from a post-translocation (POST) complex to a pre-translocation (PRE) complex, thus giving elongation factor G a second chance to translocate the tRNAs correctly. Binds to ribosomes in a GTP-dependent manner. The chain is Elongation factor 4 from Helicobacter acinonychis (strain Sheeba).